The chain runs to 1142 residues: GPI inositol-deacylase (1142 aa).

The disordered stretch occupies residues 24–59; it reads GFYKRNNANTASNDEKPNLEQNDIPSVTSSGSSTPS. Low complexity predominate over residues 47–59; the sequence is IPSVTSSGSSTPS. Residues 81–101 traverse the membrane as a helical segment; it reads SWSLYVAIIAILLLLVILHSF. The active site involves Ser-264. Residues Asn-596 and Asn-679 are each glycosylated (N-linked (GlcNAc...) asparagine). Helical transmembrane passes span 741-761, 781-801, 849-869, and 946-966; these read LLAS…FRYF, GLIK…YLIS, LLTL…LCVM, and IIGI…QLVY. N-linked (GlcNAc...) asparagine glycosylation occurs at Asn-1002. Residues 1006–1026 traverse the membrane as a helical segment; the sequence is TITILMLLLAPLDFPVLIVWA. An N-linked (GlcNAc...) asparagine glycan is attached at Asn-1028. Transmembrane regions (helical) follow at residues 1035 to 1055, 1075 to 1095, and 1097 to 1117; these read IPFP…LTEI, VFLF…PYLI, and NVVG…GFFV. An N-linked (GlcNAc...) asparagine glycan is attached at Asn-1119.

The protein belongs to the GPI inositol-deacylase family.

It localises to the endoplasmic reticulum membrane. Involved in inositol deacylation of GPI-anchored proteins which plays important roles in the quality control and ER-associated degradation of GPI-anchored proteins. The protein is GPI inositol-deacylase (bst1) of Schizosaccharomyces pombe (strain 972 / ATCC 24843) (Fission yeast).